The sequence spans 340 residues: Uroporphyrinogen decarboxylase (340 aa).

Substrate contacts are provided by residues 21–25 (RQAGR), Phe-40, Asp-71, Tyr-147, Ser-202, and His-316.

This sequence belongs to the uroporphyrinogen decarboxylase family. Homodimer.

Its subcellular location is the cytoplasm. The enzyme catalyses uroporphyrinogen III + 4 H(+) = coproporphyrinogen III + 4 CO2. Its pathway is porphyrin-containing compound metabolism; protoporphyrin-IX biosynthesis; coproporphyrinogen-III from 5-aminolevulinate: step 4/4. Catalyzes the decarboxylation of four acetate groups of uroporphyrinogen-III to yield coproporphyrinogen-III. The sequence is that of Uroporphyrinogen decarboxylase from Helicobacter hepaticus (strain ATCC 51449 / 3B1).